The primary structure comprises 72 residues: Lantibiotic lichenicidin VK21 A2 (72 aa).

The interval 1–21 (MKTMKNSAAREAFKGANHPAG) is disordered. The propeptide occupies 1 to 40 (MKTMKNSAAREAFKGANHPAGMVSEEELKALVGGNDVNPE). 2-oxobutanoic acid is present on Thr-41. (Z)-2,3-didehydrobutyrine is present on residues Thr-42, Thr-45, and Thr-46. Positions 47–51 (SSWTC) form a cross-link, lanthionine (Ser-Cys). The residue at position 48 (Ser-48) is a 2,3-didehydroalanine (Ser). (Z)-2,3-didehydrobutyrine occurs at positions 53 and 57. Positions 59–63 (SASLC) form a cross-link, lanthionine (Ser-Cys). Cross-links (beta-methyllanthionine (Thr-Cys)) lie at residues 65–68 (TTKC) and 69–72 (TSRC). Thr-66 carries the (Z)-2,3-didehydrobutyrine modification.

In terms of processing, maturation of lantibiotics involves the enzymatic conversion of Thr, and Ser into dehydrated AA and the formation of thioether bonds with cysteine. This is followed by membrane translocation and cleavage of the modified precursor. Post-translationally, the 2,3-didehydrobutyrines are determined to be the Z-isomers.

It localises to the secreted. Lanthionine-containing peptide antibiotic (lantibiotic) active on Gram-positive bacteria. The bactericidal activity of lantibiotics is based on depolarization of energized bacterial cytoplasmic membranes, initiated by the formation of aqueous transmembrane pores. When present individually, LchA2 exhibits activity towards B.subtilis L1 (IC(50)=30 uM), Rhodococcus sp. SS2 (IC(50)=16.6 uM), M.luteus B1314 (IC(50)=2.6 uM), B.megaterium VKM41 (IC(50)=2 uM), S.aureus 209p (IC(50)=20 uM), B.pumilus 2001, B.globigii I, B.amyloliquefaciens I, M.smegmatis 1171 and M.phlei 1291. However, when combined with LchA1, it displays much stronger activity against B.subtilis L1 (IC(50)=0.64 uM), Rhodococcus sp. SS2 (IC(50)=0.64 uM), M.luteus B1314 (IC(50)=0.09 uM), B.megaterium VKM41 (IC(50)=0.12 uM) and S.aureus 209p (IC(50)=0.64 uM). The activity of the combined LchA1 and LchA2 peptides is strongest at a molar ratio of 1. Even when applied at 17-fold concentration of the highest IC(50) values for Gram-positive bacteria, neither the individual nor the combined peptides display activity against Gram-negative bacteria P.aeruginosa PAO1, P.putida I-97 or E.coli C600. The protein is Lantibiotic lichenicidin VK21 A2 of Bacillus licheniformis.